Reading from the N-terminus, the 177-residue chain is Large ribosomal subunit protein uL6 (177 aa).

It belongs to the universal ribosomal protein uL6 family. In terms of assembly, part of the 50S ribosomal subunit.

Its function is as follows. This protein binds to the 23S rRNA, and is important in its secondary structure. It is located near the subunit interface in the base of the L7/L12 stalk, and near the tRNA binding site of the peptidyltransferase center. This chain is Large ribosomal subunit protein uL6, found in Alkalilimnicola ehrlichii (strain ATCC BAA-1101 / DSM 17681 / MLHE-1).